We begin with the raw amino-acid sequence, 146 residues long: Transcriptional regulator MraZ (146 aa).

SpoVT-AbrB domains are found at residues 5-47 and 76-119; these read EYYH…TITD and SIQV…AKEK.

It belongs to the MraZ family. Forms oligomers.

The protein localises to the cytoplasm. The protein resides in the nucleoid. In Dictyoglomus thermophilum (strain ATCC 35947 / DSM 3960 / H-6-12), this protein is Transcriptional regulator MraZ.